We begin with the raw amino-acid sequence, 284 residues long: NAD kinase (284 aa).

The Proton acceptor role is filled by aspartate 60. NAD(+) contacts are provided by residues aspartate 60–glycine 61, asparagine 134–aspartate 135, arginine 145, lysine 162, aspartate 164, threonine 175–serine 180, and glutamine 234.

The protein belongs to the NAD kinase family. It depends on a divalent metal cation as a cofactor.

The protein localises to the cytoplasm. The catalysed reaction is NAD(+) + ATP = ADP + NADP(+) + H(+). Involved in the regulation of the intracellular balance of NAD and NADP, and is a key enzyme in the biosynthesis of NADP. Catalyzes specifically the phosphorylation on 2'-hydroxyl of the adenosine moiety of NAD to yield NADP. The polypeptide is NAD kinase (Clostridium beijerinckii (strain ATCC 51743 / NCIMB 8052) (Clostridium acetobutylicum)).